A 313-amino-acid chain; its full sequence is Ribosomal RNA small subunit methyltransferase H (313 aa).

Residues 31–33 (GGH), Asp51, Phe77, Asp95, and Gln102 each bind S-adenosyl-L-methionine.

The protein belongs to the methyltransferase superfamily. RsmH family.

The protein resides in the cytoplasm. It catalyses the reaction cytidine(1402) in 16S rRNA + S-adenosyl-L-methionine = N(4)-methylcytidine(1402) in 16S rRNA + S-adenosyl-L-homocysteine + H(+). Its function is as follows. Specifically methylates the N4 position of cytidine in position 1402 (C1402) of 16S rRNA. The polypeptide is Ribosomal RNA small subunit methyltransferase H (Xylella fastidiosa (strain M23)).